We begin with the raw amino-acid sequence, 3083 residues long: Laminin subunit alpha-1 (3083 aa).

Positions 1 to 24 are cleaved as a signal peptide; that stretch reads MRGSGTGAALLVLLASVLWVTVRS. A Pyrrolidone carboxylic acid modification is found at Gln-25. Residues 25–276 form the Laminin N-terminal domain; that stretch reads QQRGLFPAIL…SIKDISVGGM (252 aa). 6 cysteine pairs are disulfide-bonded: Cys-277-Cys-286, Cys-279-Cys-297, Cys-299-Cys-308, Cys-311-Cys-331, Cys-334-Cys-343, and Cys-336-Cys-368. 4 consecutive Laminin EGF-like domains span residues 277–333, 334–403, 404–460, and 461–509; these read CICY…ECEE, CNCH…PCRP, CNCD…NCIP, and CDCR…GCSE. The N-linked (GlcNAc...) asparagine glycan is linked to Asn-370. 10 cysteine pairs are disulfide-bonded: Cys-371/Cys-380, Cys-383/Cys-401, Cys-404/Cys-416, Cys-406/Cys-434, Cys-436/Cys-445, Cys-448/Cys-458, Cys-461/Cys-474, Cys-463/Cys-478, Cys-480/Cys-489, and Cys-492/Cys-507. The region spanning 510–519 is the Laminin EGF-like 5; first part domain; it reads CFCFGVSGVC. One can recognise a Laminin IV type A 1 domain in the interval 523–715; that stretch reads TWSISQVTNM…DLAVAADVEH (193 aa). Residue Asn-672 is glycosylated (N-linked (GlcNAc...) asparagine). A Laminin EGF-like 5; second part domain is found at 716–748; it reads CECPQGYTGTSCEACLPGYYRVDGILFGGICQP. Intrachain disulfides connect Cys-749-Cys-758, Cys-751-Cys-764, Cys-767-Cys-776, Cys-779-Cys-795, Cys-798-Cys-813, Cys-800-Cys-823, Cys-826-Cys-835, Cys-838-Cys-853, Cys-856-Cys-870, Cys-858-Cys-877, Cys-880-Cys-889, Cys-892-Cys-906, Cys-909-Cys-921, Cys-911-Cys-928, Cys-930-Cys-939, Cys-942-Cys-955, Cys-958-Cys-970, Cys-960-Cys-976, Cys-978-Cys-987, Cys-990-Cys-1002, Cys-1005-Cys-1014, Cys-1007-Cys-1021, Cys-1023-Cys-1032, Cys-1035-Cys-1048, Cys-1051-Cys-1063, Cys-1053-Cys-1070, Cys-1072-Cys-1081, Cys-1084-Cys-1094, Cys-1097-Cys-1109, Cys-1099-Cys-1125, Cys-1127-Cys-1136, and Cys-1139-Cys-1154. Laminin EGF-like domains are found at residues 749–797, 798–855, 856–908, 909–957, 958–1004, 1005–1050, 1051–1096, and 1097–1156; these read CECH…DCQP, CACP…TCVP, CNCS…NCRA, CDCH…GCVP, CNCS…GCTP, CDCA…GCQA, CNCS…DCVP, and CGCD…GCSP. The Cell attachment site motif lies at 1147 to 1149; sequence RGD. One can recognise a Laminin EGF-like 14; first part domain in the interval 1157–1166; that stretch reads CFCFGLSQLC. One can recognise a Laminin IV type A 2 domain in the interval 1177–1368; it reads ITLASDQPLL…EGEAALLLEL (192 aa). N-linked (GlcNAc...) asparagine glycosylation occurs at Asn-1344. The 41-residue stretch at 1369 to 1409 folds into the Laminin EGF-like 14; second part domain; sequence CVCPPGTAGHSCQDCAPGYYREKLPESGGRGPRPLLAPCVP. 12 disulfide bridges follow: Cys-1410–Cys-1419, Cys-1412–Cys-1426, Cys-1429–Cys-1438, Cys-1441–Cys-1456, Cys-1459–Cys-1473, Cys-1461–Cys-1483, Cys-1486–Cys-1495, Cys-1498–Cys-1513, Cys-1516–Cys-1528, Cys-1518–Cys-1535, Cys-1537–Cys-1546, and Cys-1549–Cys-1560. 3 Laminin EGF-like domains span residues 1410-1458, 1459-1515, and 1516-1562; these read CNCN…DCTP, CTCP…SCQT, and CDCN…DCVS. Positions 1564–2123 are domain II and I; the sequence is DDDCVGPLLN…SRARKQVASI (560 aa). Residues 1617 to 1691 are a coiled coil; it reads AKKIRAEIQL…VATLNQTARK (75 aa). N-linked (GlcNAc...) asparagine glycosylation is found at Asn-1659, Asn-1686, Asn-1718, Asn-1725, Asn-1763, and Asn-1811. Positions 1723–1809 form a coiled coil; the sequence is QQNATLELKA…QEKKLRVQEE (87 aa). Residues 1868–1901 adopt a coiled-coil conformation; the sequence is KRRARDLVHRAEQHASELQSRAGALDRDLENVRN. 4 N-linked (GlcNAc...) asparagine glycosylation sites follow: Asn-1935, Asn-2026, Asn-2045, and Asn-2066. 5 Laminin G-like domains span residues 2124–2304, 2312–2488, 2493–2679, 2721–2893, and 2898–3078; these read KVAV…CNGC, DSSF…RKGC, IQSV…LDTC, AHQF…VDRC, and QEGT…PHSC. Cys-2278 and Cys-2304 are joined by a disulfide. An N-linked (GlcNAc...) asparagine glycan is attached at Asn-2355. Cystine bridges form between Cys-2464/Cys-2488 and Cys-2652/Cys-2679. Asn-2834 carries an N-linked (GlcNAc...) asparagine glycan. The cysteines at positions 2868 and 2893 are disulfide-linked. Asn-2923 carries N-linked (GlcNAc...) asparagine glycosylation. Residues Cys-3047 and Cys-3078 are joined by a disulfide bond.

As to quaternary structure, laminin is a complex glycoprotein, consisting of three different polypeptide chains (alpha, beta, gamma), which are bound to each other by disulfide bonds into a cross-shaped molecule comprising one long and three short arms with globules at each end. Alpha-1 is a subunit of laminin-1 (laminin-111 or EHS laminin) and laminin-3 (laminin-121 or S-laminin). Post-translationally, tyrosine phosphorylated by PKDCC/VLK.

The protein localises to the secreted. It localises to the extracellular space. The protein resides in the extracellular matrix. It is found in the basement membrane. In terms of biological role, binding to cells via a high affinity receptor, laminin is thought to mediate the attachment, migration and organization of cells into tissues during embryonic development by interacting with other extracellular matrix components. This is Laminin subunit alpha-1 (Lama1) from Mus musculus (Mouse).